Reading from the N-terminus, the 345-residue chain is UPF0284 protein STK_21430 (345 aa).

It belongs to the UPF0284 family.

The polypeptide is UPF0284 protein STK_21430 (Sulfurisphaera tokodaii (strain DSM 16993 / JCM 10545 / NBRC 100140 / 7) (Sulfolobus tokodaii)).